Here is a 704-residue protein sequence, read N- to C-terminus: ATPase synthesis protein 25, mitochondrial (704 aa).

A mitochondrion-targeting transit peptide spans 1 to 47; it reads MNRVLSKGPKGLNGLLRACPSNSGRSFLYHSTYNVSSRTFWSASRLR. Disordered regions lie at residues 47–76 and 283–313; these read RSEDSPSGSQPLKPDPNDGIGNNTSSASSQ and KQVSIDTKSDAPHEEVRAPTPVQNSSSDHVF. Over residues 66-76 the composition is skewed to polar residues; the sequence is IGNNTSSASSQ. A compositionally biased stretch (basic and acidic residues) spans 289–299; that stretch reads TKSDAPHEEVR.

It belongs to the ATP25 family.

It is found in the mitochondrion inner membrane. Functionally, probable mitochondrial mRNA stabilization factor. The protein is ATPase synthesis protein 25, mitochondrial (atp25) of Aspergillus fumigatus (strain ATCC MYA-4609 / CBS 101355 / FGSC A1100 / Af293) (Neosartorya fumigata).